The primary structure comprises 439 residues: Tol-Pal system protein TolB (439 aa).

The first 22 residues, 1-22 (MTKFPRWLAMLVGLLFPLSALT), serve as a signal peptide directing secretion.

Belongs to the TolB family. As to quaternary structure, the Tol-Pal system is composed of five core proteins: the inner membrane proteins TolA, TolQ and TolR, the periplasmic protein TolB and the outer membrane protein Pal. They form a network linking the inner and outer membranes and the peptidoglycan layer.

The protein localises to the periplasm. Functionally, part of the Tol-Pal system, which plays a role in outer membrane invagination during cell division and is important for maintaining outer membrane integrity. In Xylella fastidiosa (strain 9a5c), this protein is Tol-Pal system protein TolB.